The chain runs to 519 residues: Cysteine--tRNA ligase (519 aa).

Cys-30 is a binding site for Zn(2+). A 'HIGH' region motif is present at residues 32–42; it reads PTVYDRAHLGN. 3 residues coordinate Zn(2+): Cys-221, His-253, and Glu-257. A 'KMSKS' region motif is present at residues 286–290; it reads KMSKS. Position 289 (Lys-289) interacts with ATP.

It belongs to the class-I aminoacyl-tRNA synthetase family. As to quaternary structure, monomer. Requires Zn(2+) as cofactor.

It localises to the cytoplasm. It carries out the reaction tRNA(Cys) + L-cysteine + ATP = L-cysteinyl-tRNA(Cys) + AMP + diphosphate. The polypeptide is Cysteine--tRNA ligase (Cereibacter sphaeroides (strain KD131 / KCTC 12085) (Rhodobacter sphaeroides)).